A 620-amino-acid polypeptide reads, in one-letter code: KIF-binding protein (620 aa).

Coiled-coil stretches lie at residues 30-64 (YKSK…QDIL) and 133-169 (LIKS…QLQN).

Belongs to the KIF-binding protein family.

It localises to the cytoplasm. Its subcellular location is the cytoskeleton. Functionally, activator of KIF1B plus-end-directed microtubule motor activity. Required for organization of axonal microtubules, and axonal outgrowth and maintenance during peripheral and central nervous system development. This chain is KIF-binding protein (kifbp), found in Dictyostelium discoideum (Social amoeba).